Consider the following 492-residue polypeptide: MGAKDITGRSTTQGFAQQHGGVSDVVVKTPFYQVSCCGPVSWTSGCHSLTESTCSRLFYILLHMGASAICCLLLSKTVVERVWGKAHGIQMPSVLCAHLFGNSDCPVLSGSGAVYRVCAGTATFHLLQAVLLVRLHSPTSPRAQLHNSFWSLKLLFLLGLCTAAFCIPDEHLFPAWHYIGICGGFTFILLQLVLITAFAQSWNKNWQTGAAQDCSWFLGVLLATLGFYSMAGVGAVLLFHHYTHPDGCLLNKMLLSLHLCFCGLLSLLSIAPCIRLRQPNSGLLQASIISCYIMYLTFSALSSRPPETIIFQGQNHTLCLPGQNKMEPQIPDASVAVFSASIMYACVLFACNEASYLAQLFGPLWIIKVYKYEFQKPSVCFCCPQTVEPEDGQGSRARPADQETPPAAQVQSQHLSYSYSGFHFAFFLASLYVMVTLTNWFSYEEAELEKTFTKGSWATFWVKVASCWACVLLYLGLLLAPLLAHHSESPPP.

10 helical membrane-spanning segments follow: residues 58–78, 113–133, 148–168, 179–199, 217–237, 254–274, 281–301, 330–350, 421–441, and 464–484; these read FYILLHMGASAICCLLLSKTV, AVYRVCAGTATFHLLQAVLLV, SFWSLKLLFLLGLCTAAFCIP, IGICGGFTFILLQLVLITAFA, FLGVLLATLGFYSMAGVGAVL, LLSLHLCFCGLLSLLSIAPCI, SGLLQASIISCYIMYLTFSAL, IPDASVAVFSASIMYACVLFA, GFHFAFFLASLYVMVTLTNWF, and VASCWACVLLYLGLLLAPLLA.

The protein belongs to the TDE1 family.

The protein resides in the membrane. Functionally, incorporates a polar amino acid serine into membranes and facilitates the synthesis of two serine-derived lipids, phosphatidylserine and sphingolipids. The polypeptide is Serine incorporator 4 (Serinc4) (Rattus norvegicus (Rat)).